Reading from the N-terminus, the 98-residue chain is uncharacterized protein (98 aa).

This sequence belongs to the YciI family. In terms of assembly, homodimer.

This is an uncharacterized protein from Haemophilus influenzae (strain ATCC 51907 / DSM 11121 / KW20 / Rd).